A 203-amino-acid chain; its full sequence is Adenosylcobalamin/alpha-ribazole phosphatase (203 aa).

His8 (tele-phosphohistidine intermediate) is an active-site residue. Catalysis depends on Glu81, which acts as the Proton donor/acceptor.

Belongs to the phosphoglycerate mutase family.

The catalysed reaction is adenosylcob(III)alamin 5'-phosphate + H2O = adenosylcob(III)alamin + phosphate. The enzyme catalyses alpha-ribazole 5'-phosphate + H2O = alpha-ribazole + phosphate. It participates in nucleoside biosynthesis; alpha-ribazole biosynthesis; alpha-ribazole from 5,6-dimethylbenzimidazole: step 2/2. In terms of biological role, catalyzes the conversion of adenosylcobalamin 5'-phosphate to adenosylcobalamin (vitamin B12); involved in the assembly of the nucleotide loop of cobalamin. Also catalyzes the hydrolysis of the phospho group from alpha-ribazole 5'-phosphate to form alpha-ribazole. This chain is Adenosylcobalamin/alpha-ribazole phosphatase (cobC), found in Escherichia coli (strain K12).